We begin with the raw amino-acid sequence, 178 residues long: FXYD domain-containing ion transport regulator 5 (178 aa).

Residues 1-21 (MSLSSRLCLLTIVALILPSRG) form the signal peptide. The span at 21 to 59 (GQTPKKPTSIFTADQTSATTRDNVPDPDQTSPGVQTTPL) shows a compositional bias: polar residues. The segment at 21-130 (GQTPKKPTSI…SYIEHPLDSN (110 aa)) is disordered. Residues 22–145 (QTPKKPTSIF…YYDDTTLRKR (124 aa)) lie on the Extracellular side of the membrane. The segment covering 67 to 79 (TGSQTAAQTETQQ) has biased composition (low complexity). Residues 80 to 100 (LTKMATSNPVSDPGPHTSSKK) are compositionally biased toward polar residues. Residues 146-166 (GLLVAAVLFITGIIILTSGKC) traverse the membrane as a helical segment. Residues 167-178 (RQLSQFCLNRHR) lie on the Cytoplasmic side of the membrane.

Belongs to the FXYD family. As to quaternary structure, regulatory subunit of the sodium/potassium-transporting ATPase which is composed of a catalytic alpha subunit, a non-catalytic beta subunit and an additional regulatory subunit. The regulatory subunit, a member of the FXYD protein family, modulates the enzymatic activity in a tissue- and isoform-specific way by changing affinities of the Na+/K+-ATPase toward Na(+), K(+) or ATP. In terms of processing, glycosylated. As to expression, expressed mainly in epithelial tissue, such as lung, intestine and kidney. Not detected in brain, liver, muscle, and heart.

The protein localises to the cell membrane. Its subcellular location is the basolateral cell membrane. Associates with and regulates the activity of the sodium/potassium-transporting ATPase (NKA) which catalyzes the hydrolysis of ATP coupled with the exchange of Na(+) and K(+) ions across the plasma membrane. May increase NKA activity by increasing the apparent affinity for Na(+). Involved in down-regulation of E-cadherin which results in reduced cell adhesion. Promotes metastasis. The chain is FXYD domain-containing ion transport regulator 5 (Fxyd5) from Mus musculus (Mouse).